The primary structure comprises 176 residues: NAD(P)H-quinone oxidoreductase subunit 6, chloroplastic (176 aa).

Transmembrane regions (helical) follow at residues 10–30 (FLLV…VLLP), 32–52 (PIFS…LYIL), 61–81 (AQLL…VMFM), 92–112 (LWTV…FLLM), and 152–172 (FFLP…GAIS).

This sequence belongs to the complex I subunit 6 family. NDH is composed of at least 16 different subunits, 5 of which are encoded in the nucleus.

It is found in the plastid. It localises to the chloroplast thylakoid membrane. It catalyses the reaction a plastoquinone + NADH + (n+1) H(+)(in) = a plastoquinol + NAD(+) + n H(+)(out). The enzyme catalyses a plastoquinone + NADPH + (n+1) H(+)(in) = a plastoquinol + NADP(+) + n H(+)(out). Its function is as follows. NDH shuttles electrons from NAD(P)H:plastoquinone, via FMN and iron-sulfur (Fe-S) centers, to quinones in the photosynthetic chain and possibly in a chloroplast respiratory chain. The immediate electron acceptor for the enzyme in this species is believed to be plastoquinone. Couples the redox reaction to proton translocation, and thus conserves the redox energy in a proton gradient. The chain is NAD(P)H-quinone oxidoreductase subunit 6, chloroplastic (ndhG) from Olimarabidopsis pumila (Dwarf rocket).